We begin with the raw amino-acid sequence, 290 residues long: Protease HtpX homolog (290 aa).

Transmembrane regions (helical) follow at residues methionine 5–phenylalanine 27 and valine 32–serine 51. Histidine 133 contacts Zn(2+). Residue glutamate 134 is part of the active site. A Zn(2+)-binding site is contributed by histidine 137. Transmembrane regions (helical) follow at residues isoleucine 143 to alanine 163 and isoleucine 182 to alanine 202. Residue glutamate 208 participates in Zn(2+) binding.

This sequence belongs to the peptidase M48B family. Zn(2+) is required as a cofactor.

It is found in the cell membrane. The sequence is that of Protease HtpX homolog from Thermococcus kodakarensis (strain ATCC BAA-918 / JCM 12380 / KOD1) (Pyrococcus kodakaraensis (strain KOD1)).